The sequence spans 298 residues: Transcription factor RHD6 (298 aa).

Disordered regions lie at residues 1 to 58 and 157 to 213; these read MALV…SDHQ and TGSR…AKNR. Low complexity predominate over residues 15-27; sequence SKQNSSSSEDLSS. Composition is skewed to polar residues over residues 157-168 and 177-190; these read TGSRNESLSPKS and GESTQPSKKLSSGV. The segment covering 191–205 has biased composition (low complexity); sequence TGKTKPKPTTSPKDP. A basic motif region spans residues 201–214; sequence SPKDPQSLAAKNRR. The 50-residue stretch at 201–250 folds into the bHLH domain; the sequence is SPKDPQSLAAKNRRERISERLKILQELVPNGTKVDLVTMLEKAISYVKFL. The tract at residues 215–250 is helix-loop-helix motif; the sequence is ERISERLKILQELVPNGTKVDLVTMLEKAISYVKFL.

Homodimer. Forms heterodimers with RSL1. Interacts with TIFY10B/JAZ2, TIFY6A/JAZ4, TIFY5A/JAZ8, TIFY7/JAZ9 and TIFY9/JAZ10. In terms of tissue distribution, expressed constitutively in flowers. Expressed in root epidermal hair cells.

The protein localises to the nucleus. Its function is as follows. Transcription factor that is specifically required for the development of root hairs. Acts with RSL1 to positively regulate root hair development. Acts downstream of genes that regulate epidermal pattern formation, such as GL2. Targets directly RSL4, another transcription factor involved in the regulation of root hair elongation. Acts with RSL1 as transcription factor that integrates a jasmonate (JA) signaling pathway that stimulates root hair growth. The protein is Transcription factor RHD6 of Arabidopsis thaliana (Mouse-ear cress).